A 291-amino-acid chain; its full sequence is Protease HtpX (291 aa).

A run of 2 helical transmembrane segments spans residues 4–24 (VLLF…VLSV) and 37–57 (GGLL…SLLM). His-143 provides a ligand contact to Zn(2+). The active site involves Glu-144. His-147 is a binding site for Zn(2+). Helical transmembrane passes span 158–178 (LIQG…AGIV) and 198–218 (FAIS…IVMW). Zn(2+) is bound at residue Glu-224.

It belongs to the peptidase M48B family. Zn(2+) is required as a cofactor.

The protein resides in the cell inner membrane. The sequence is that of Protease HtpX from Tolumonas auensis (strain DSM 9187 / NBRC 110442 / TA 4).